A 404-amino-acid polypeptide reads, in one-letter code: MGLFDKHLAYRDAYKAIQDVGANPFKVRFDAVHSPTEGVVDGRPTILLGTNNYLGLTFDEQAIAASVKAVQERGTGTTGSRIANGSFESHVELEQELAKFYGRKHAMVFTTGYQANLGVLSTLVGRGDHLILDADSHASIYDGSRLGHAEVIRFRHNDPEDLAKRLRRLGDAPGERLIVVEGIYSMIGDVAPLKEIAAVKREMGGYLLVDEAHSMGVLGATGRGLAEAAGVEEDVDFIVGTFSKSLGAIGGFCVSDHDDFDVMRVICRPYMFTASLPPAVAASTVTALRRMIEQPELRDRLNRNAKRLYDGLTAMGFLTGPSASPIVAATMPDQERAIAMWNGLLQAGVYLNLALPPATPDSRPLLRASVSAAHTDEQIDAVLKTYGEIGAALGVIEPLKRARA.

Pyridoxal 5'-phosphate contacts are provided by residues 112–113 (GY), Ser-185, His-213, and Thr-241. Lys-244 carries the post-translational modification N6-(pyridoxal phosphate)lysine.

This sequence belongs to the class-II pyridoxal-phosphate-dependent aminotransferase family. Pyridoxal 5'-phosphate is required as a cofactor.

Its subcellular location is the cytoplasm. It carries out the reaction L-serine + hexadecanoyl-CoA + H(+) = 3-oxosphinganine + CO2 + CoA. The protein operates within lipid metabolism; sphingolipid metabolism. Involved in de novo bacterial ceramide synthesis. Catalyzes the condensation of L-serine with palmitoyl-CoA (hexadecanoyl-CoA) to produce 3-oxosphinganine. Can also condense serine and C16:1-CoA, but shows a preference for palmitoyl-CoA. This Caulobacter vibrioides (strain NA1000 / CB15N) (Caulobacter crescentus) protein is Serine palmitoyltransferase.